Reading from the N-terminus, the 350-residue chain is Biotin synthase (350 aa).

The Radical SAM core domain maps to 38-256 (NHVQVSTLLS…IAVARIMMPE (219 aa)). [4Fe-4S] cluster is bound by residues C53, C57, and C60. [2Fe-2S] cluster-binding residues include C97, C128, C188, and R260.

The protein belongs to the radical SAM superfamily. Biotin synthase family. As to quaternary structure, homodimer. It depends on [4Fe-4S] cluster as a cofactor. [2Fe-2S] cluster is required as a cofactor.

The catalysed reaction is (4R,5S)-dethiobiotin + (sulfur carrier)-SH + 2 reduced [2Fe-2S]-[ferredoxin] + 2 S-adenosyl-L-methionine = (sulfur carrier)-H + biotin + 2 5'-deoxyadenosine + 2 L-methionine + 2 oxidized [2Fe-2S]-[ferredoxin]. The protein operates within cofactor biosynthesis; biotin biosynthesis; biotin from 7,8-diaminononanoate: step 2/2. In terms of biological role, catalyzes the conversion of dethiobiotin (DTB) to biotin by the insertion of a sulfur atom into dethiobiotin via a radical-based mechanism. In Aliivibrio fischeri (strain MJ11) (Vibrio fischeri), this protein is Biotin synthase.